A 327-amino-acid chain; its full sequence is Fe-S cluster assembly protein DRE2 (327 aa).

The segment covering 1-14 (MSPATVTIDTTPDF) has biased composition (polar residues). Disordered regions lie at residues 1-20 (MSPA…GGAP) and 153-179 (NKGE…AAAA). The interval 17 to 144 (GGAPHSTLLL…EKPAEEVAAV (128 aa)) is N-terminal SAM-like domain. Residues 145–214 (PLKFLKKKNK…EDELMTEEDL (70 aa)) form a linker region. Low complexity predominate over residues 164–179 (PAAATQPTAPAPAAAA). The [2Fe-2S] cluster site is built by C224, C235, C238, and C240. The fe-S binding site A stretch occupies residues 224–240 (CAPKPGKKRRACKDCTC). [4Fe-4S] cluster is bound by residues C290, C293, C301, and C304. 2 short sequence motifs (cx2C motif) span residues 290 to 293 (CGSC) and 301 to 304 (CADC). Residues 290-304 (CGSCALGDAFRCADC) are fe-S binding site B.

The protein belongs to the anamorsin family. Monomer. Interacts with TAH18. Interacts with MIA40. [2Fe-2S] cluster serves as cofactor. Requires [4Fe-4S] cluster as cofactor.

The protein resides in the cytoplasm. It is found in the mitochondrion intermembrane space. Functionally, component of the cytosolic iron-sulfur (Fe-S) protein assembly (CIA) machinery required for the maturation of extramitochondrial Fe-S proteins. Part of an electron transfer chain functioning in an early step of cytosolic Fe-S biogenesis, facilitating the de novo assembly of a [4Fe-4S] cluster on the scaffold complex CFD1-NBP35. Electrons are transferred to DRE2 from NADPH via the FAD- and FMN-containing protein TAH18. TAH18-DRE2 are also required for the assembly of the diferric tyrosyl radical cofactor of ribonucleotide reductase (RNR), probably by providing electrons for reduction during radical cofactor maturation in the catalytic small subunit RNR2. The polypeptide is Fe-S cluster assembly protein DRE2 (Pyricularia oryzae (strain 70-15 / ATCC MYA-4617 / FGSC 8958) (Rice blast fungus)).